A 397-amino-acid polypeptide reads, in one-letter code: Small ribosomal subunit protein mS29 (397 aa).

A mitochondrion-targeting transit peptide spans 1-17 (MLKGMTRLVSRVHKLDP). K174 and K206 each carry N6-acetyllysine.

The protein belongs to the mitochondrion-specific ribosomal protein mS29 family. Component of the mitochondrial ribosome small subunit (28S) which comprises a 12S rRNA and about 30 distinct proteins. Interacts with DELE1. Interacts with NOA1.

The protein resides in the mitochondrion. The catalysed reaction is GTP + H2O = GDP + phosphate + H(+). As a component of the mitochondrial small ribosomal subunit, it plays a role in the translation of mitochondrial mRNAs. Involved in mediating interferon-gamma-induced cell death. Displays GTPase activity in vitro. This is Small ribosomal subunit protein mS29 from Bos taurus (Bovine).